The chain runs to 352 residues: Quinolinate synthase (352 aa).

Iminosuccinate is bound by residues His55 and Ser72. A [4Fe-4S] cluster-binding site is contributed by Cys117. Iminosuccinate-binding positions include 143–145 (YVN) and Ser160. A [4Fe-4S] cluster-binding site is contributed by Cys204. Residues 230 to 232 (HPE) and Thr258 each bind iminosuccinate. Cys303 is a [4Fe-4S] cluster binding site.

This sequence belongs to the quinolinate synthase family. Type 2 subfamily. [4Fe-4S] cluster is required as a cofactor.

Its subcellular location is the cytoplasm. It carries out the reaction iminosuccinate + dihydroxyacetone phosphate = quinolinate + phosphate + 2 H2O + H(+). It participates in cofactor biosynthesis; NAD(+) biosynthesis; quinolinate from iminoaspartate: step 1/1. Functionally, catalyzes the condensation of iminoaspartate with dihydroxyacetone phosphate to form quinolinate. This chain is Quinolinate synthase, found in Mycobacterium leprae (strain Br4923).